Here is a 318-residue protein sequence, read N- to C-terminus: MEKLVTQQVQNVDPKQSEILNISEIPAENPTETPIISKQKLLEAGVYFGHKASQWHPKMAQFLLKKKRNETHIIDVLKTQKMLEIAYKLVEKFAQKGAKFIFVGTKKQAKKVIEEQAVRTNSIYVSGRWLGGTLTNNRTILSRLKTMENLEKQAAENFQGYTKKEKLAKQKQLAKLQKNLNGIKGLKDVPLFSLIMLVADPLKDAIAVKEARKKGIKIIGITDSNVDPSLVDFGIPANDDSTKSITLIFTVLADAIASAKGGKKLFAYQSDENIILPEDPEKELKQTRYRNNSFEKFARQKNTLKESQVLKPNTEIQA.

It belongs to the universal ribosomal protein uS2 family.

The polypeptide is Small ribosomal subunit protein uS2 (Mesomycoplasma hyopneumoniae (strain J / ATCC 25934 / NCTC 10110) (Mycoplasma hyopneumoniae)).